Reading from the N-terminus, the 458-residue chain is Preferentially expressed antigen in melanoma-like protein 1 (458 aa).

One copy of the LRR 1; degenerate repeat lies at 99–126 (RCKLQVLDLRVMPLKLWNRLPVFGTAGC). Residues 176–200 (SLCCCKLQIWAMSMYYHRKLLEILD) form an LRR 2; degenerate repeat. An LRR 3; degenerate repeat occupies 201-227 (LDSVQELRMYCISNPVCLLNFAPYLGR). Residues 228 to 263 (MRNLRCLILSHLWQTFSMTPVEKQQVITQFTSQFLK) form an LRR 4; degenerate repeat. 5 LRR repeats span residues 264-289 (LKCL…FWWL), 290-321 (KTPL…SQLK), 322-340 (HLNL…PLRV), 346-373 (ASTL…ALRC), and 374-398 (CTQL…LAYN).

The protein belongs to the PRAME family. Specifically expressed in testis (at protein level).

It localises to the cytoplasm. The protein resides in the cytoplasmic vesicle. Its subcellular location is the secretory vesicle. It is found in the acrosome. The protein localises to the cell projection. It localises to the cilium. The protein resides in the flagellum. May play a role in acrosome development and also in sperm maturation and motility. The protein is Preferentially expressed antigen in melanoma-like protein 1 of Mus musculus (Mouse).